Consider the following 383-residue polypeptide: Serine protease 23 (383 aa).

Residues 1–19 (MAGIPGLLFLLFLLLCAVG) form the signal peptide. Residue Asn93 is glycosylated (N-linked (GlcNAc...) asparagine). The segment at 108 to 127 (SSGGGAQHRDSGSSGKSRRK) is disordered. A Phosphoserine; by FAM20C modification is found at Ser109. A disulfide bridge connects residues Cys160 and Cys176. The active-site Charge relay system is His175. An N-linked (GlcNAc...) asparagine glycan is attached at Asn207. Catalysis depends on charge relay system residues Asp240 and Ser316.

It belongs to the peptidase S1 family.

It localises to the secreted. This chain is Serine protease 23 (PRSS23), found in Macaca mulatta (Rhesus macaque).